A 151-amino-acid chain; its full sequence is 3-hydroxyacyl-[acyl-carrier-protein] dehydratase FabZ (151 aa).

The active site involves histidine 54.

This sequence belongs to the thioester dehydratase family. FabZ subfamily.

The protein localises to the cytoplasm. The enzyme catalyses a (3R)-hydroxyacyl-[ACP] = a (2E)-enoyl-[ACP] + H2O. Its function is as follows. Involved in unsaturated fatty acids biosynthesis. Catalyzes the dehydration of short chain beta-hydroxyacyl-ACPs and long chain saturated and unsaturated beta-hydroxyacyl-ACPs. The sequence is that of 3-hydroxyacyl-[acyl-carrier-protein] dehydratase FabZ from Sodalis glossinidius (strain morsitans).